A 473-amino-acid polypeptide reads, in one-letter code: tRNA-2-methylthio-N(6)-dimethylallyladenosine synthase (473 aa).

Residues 5–125 enclose the MTTase N-terminal domain; sequence RKLHIKSYGC…LPQLLARAKA (121 aa). Positions 14, 50, 88, 166, 170, and 173 each coordinate [4Fe-4S] cluster. The Radical SAM core domain occupies 152 to 384; the sequence is RARGISAFVT…QNLIDSQQSA (233 aa). The region spanning 387-449 is the TRAM domain; it reads RAAVGTTVDV…RYSLLGSLAS (63 aa). A compositionally biased stretch (low complexity) spans 453-462; sequence SRASADDAPP. The disordered stretch occupies residues 453 to 473; sequence SRASADDAPPVGASSPAIMGV.

It belongs to the methylthiotransferase family. MiaB subfamily. In terms of assembly, monomer. It depends on [4Fe-4S] cluster as a cofactor.

The protein localises to the cytoplasm. The enzyme catalyses N(6)-dimethylallyladenosine(37) in tRNA + (sulfur carrier)-SH + AH2 + 2 S-adenosyl-L-methionine = 2-methylsulfanyl-N(6)-dimethylallyladenosine(37) in tRNA + (sulfur carrier)-H + 5'-deoxyadenosine + L-methionine + A + S-adenosyl-L-homocysteine + 2 H(+). Its function is as follows. Catalyzes the methylthiolation of N6-(dimethylallyl)adenosine (i(6)A), leading to the formation of 2-methylthio-N6-(dimethylallyl)adenosine (ms(2)i(6)A) at position 37 in tRNAs that read codons beginning with uridine. This Nitrobacter hamburgensis (strain DSM 10229 / NCIMB 13809 / X14) protein is tRNA-2-methylthio-N(6)-dimethylallyladenosine synthase.